A 409-amino-acid polypeptide reads, in one-letter code: Probable peptidoglycan glycosyltransferase FtsW (409 aa).

9 consecutive transmembrane segments (helical) span residues 42-62 (LFTLAMALLAFGFVMVTSASL), 72-92 (PFHFAIRHGIYILISLAVMLA), 108-128 (LLLLGLIMLLMVLVVGYEVNG), 135-155 (VGPITFQAAEVAKLFFCIYMA), 178-198 (LLFIAAVLLLMQPDFGTVVVL), 213-233 (LWQFFAVFITCVLALILLIIV), 303-323 (FLGVLAVIATVLMLVWRALII), 337-357 (YLAYGIGIWFSIQAFVNIGVA), and 368-388 (LPLVSYGGNSLIISALAVGLL).

It belongs to the SEDS family. FtsW subfamily.

The protein resides in the cell inner membrane. It catalyses the reaction [GlcNAc-(1-&gt;4)-Mur2Ac(oyl-L-Ala-gamma-D-Glu-L-Lys-D-Ala-D-Ala)](n)-di-trans,octa-cis-undecaprenyl diphosphate + beta-D-GlcNAc-(1-&gt;4)-Mur2Ac(oyl-L-Ala-gamma-D-Glu-L-Lys-D-Ala-D-Ala)-di-trans,octa-cis-undecaprenyl diphosphate = [GlcNAc-(1-&gt;4)-Mur2Ac(oyl-L-Ala-gamma-D-Glu-L-Lys-D-Ala-D-Ala)](n+1)-di-trans,octa-cis-undecaprenyl diphosphate + di-trans,octa-cis-undecaprenyl diphosphate + H(+). Its pathway is cell wall biogenesis; peptidoglycan biosynthesis. In terms of biological role, peptidoglycan polymerase that is essential for cell division. This chain is Probable peptidoglycan glycosyltransferase FtsW, found in Idiomarina loihiensis (strain ATCC BAA-735 / DSM 15497 / L2-TR).